Here is a 240-residue protein sequence, read N- to C-terminus: Flagellar L-ring protein (240 aa).

The signal sequence occupies residues 1-20 (MIRNFLLFFMPIYAILFLSG). C21 carries the N-palmitoyl cysteine lipid modification. Residue C21 is the site of S-diacylglycerol cysteine attachment.

It belongs to the FlgH family. As to quaternary structure, the basal body constitutes a major portion of the flagellar organelle and consists of four rings (L,P,S, and M) mounted on a central rod.

The protein resides in the cell outer membrane. It localises to the bacterial flagellum basal body. Functionally, assembles around the rod to form the L-ring and probably protects the motor/basal body from shearing forces during rotation. The sequence is that of Flagellar L-ring protein from Sulfurimonas denitrificans (strain ATCC 33889 / DSM 1251) (Thiomicrospira denitrificans (strain ATCC 33889 / DSM 1251)).